We begin with the raw amino-acid sequence, 433 residues long: 26S proteasome regulatory subunit 7 (433 aa).

Residues M1 to I22 are disordered. Residues D8–I22 are compositionally biased toward basic and acidic residues. Position 116 is an N6-acetyllysine (K116). ATP is bound at residue G216–T223. Position 422 is an N6-acetyllysine (K422).

It belongs to the AAA ATPase family. In terms of assembly, component of the 19S proteasome regulatory particle complex. The 26S proteasome consists of a 20S core particle (CP) and two 19S regulatory subunits (RP). The regulatory particle is made of a lid composed of 9 subunits, a base containing 6 ATPases including PSMC2 and few additional components. Interacts with NDC80/HEC; this interaction is detected only during M phase. Interacts and SQSTM1. Interacts with PAAF1. Directly interacts with TRIM5. In terms of processing, monoubiquitinated by RNF181. Phosphorylated. Dephosphorylated by UBLCP1 which impairs PSMC2 ATPase activity and disrupts 26S proteasome assembly.

The protein resides in the cytoplasm. It localises to the nucleus. Its function is as follows. Component of the 26S proteasome, a multiprotein complex involved in the ATP-dependent degradation of ubiquitinated proteins. This complex plays a key role in the maintenance of protein homeostasis by removing misfolded or damaged proteins, which could impair cellular functions, and by removing proteins whose functions are no longer required. Therefore, the proteasome participates in numerous cellular processes, including cell cycle progression, apoptosis, or DNA damage repair. PSMC2 belongs to the heterohexameric ring of AAA (ATPases associated with diverse cellular activities) proteins that unfolds ubiquitinated target proteins that are concurrently translocated into a proteolytic chamber and degraded into peptides. The polypeptide is 26S proteasome regulatory subunit 7 (PSMC2) (Bos taurus (Bovine)).